The sequence spans 107 residues: uncharacterized protein (107 aa).

Positions 13 to 68 constitute an HTH cro/C1-type domain; sequence LQEEFLEPLSLKISDLAQILDVHRNTASNIVNNSSRITLEMAVKLAKVFDTTPEFW. A DNA-binding region (H-T-H motif) is located at residues 24 to 43; the sequence is KISDLAQILDVHRNTASNIV.

Belongs to the VapA/VapI family.

This is an uncharacterized protein from Haemophilus influenzae (strain ATCC 51907 / DSM 11121 / KW20 / Rd).